The sequence spans 90 residues: U7-theraphotoxin-Hhn1i (90 aa).

Positions 1 to 19 are cleaved as a signal peptide; that stretch reads MKTAIFTVVLALAVFAVLS. Residues 20–50 constitute a propeptide that is removed on maturation; sequence FGWEANEKALSEEFTELIHEKEAASETEARE. 3 cysteine pairs are disulfide-bonded: Cys-51–Cys-65, Cys-58–Cys-70, and Cys-64–Cys-81.

The protein belongs to the neurotoxin 10 (Hwtx-1) family. 13 (Hntx-13) subfamily. Expressed by the venom gland.

Its subcellular location is the secreted. Functionally, ion channel inhibitor. This chain is U7-theraphotoxin-Hhn1i, found in Cyriopagopus hainanus (Chinese bird spider).